The following is a 308-amino-acid chain: Homoserine kinase (308 aa).

95–105 (PQSRGLGSSAA) is a binding site for ATP.

The protein belongs to the GHMP kinase family. Homoserine kinase subfamily.

It localises to the cytoplasm. The enzyme catalyses L-homoserine + ATP = O-phospho-L-homoserine + ADP + H(+). The protein operates within amino-acid biosynthesis; L-threonine biosynthesis; L-threonine from L-aspartate: step 4/5. Functionally, catalyzes the ATP-dependent phosphorylation of L-homoserine to L-homoserine phosphate. The sequence is that of Homoserine kinase from Corynebacterium diphtheriae (strain ATCC 700971 / NCTC 13129 / Biotype gravis).